Here is a 150-residue protein sequence, read N- to C-terminus: Large ribosomal subunit protein bL9 (150 aa).

It belongs to the bacterial ribosomal protein bL9 family.

Binds to the 23S rRNA. This chain is Large ribosomal subunit protein bL9, found in Shewanella sediminis (strain HAW-EB3).